The following is a 1383-amino-acid chain: Periaxin (1383 aa).

Position 7 is a phosphoserine (S7). In terms of domain architecture, PDZ spans 16 to 99; sequence LVEIIVETEA…YKVSFCLKRT (84 aa). A Nuclear export signal motif is present at residues 70-84; sequence VFFENFKYEDALRLL. Phosphoserine is present on residues S133 and S243. 46 consecutive repeat copies span residues 432–436, 440–444, 448–452, 456–460, 461–465, 466–470, 474–478, 482–486, 487–491, 492–496, 497–501, 502–506, 507–511, 515–519, 523–527, 531–535, 536–540, 544–548, 549–553, 554–558, 562–566, 567–571, 575–579, 580–584, 585–589, 593–597, 601–605, 606–610, 611–615, 619–623, 627–631, 632–636, 637–641, 645–649, 653–657, 658–662, 663–667, 671–675, 676–680, 684–688, 689–693, 694–698, 699–703, 705–709, 713–717, and 718–722. A 46 X 5 AA approximate tandem repeats of [LVMGIE]-[PSM]-[EDKA]-[LIVMA]-[AQKHPRT]; that may have a tripeptide spacer of [ALKD]-[IPV]-[KPH] region spans residues 432 to 722; that stretch reads GPEVKAPKGP…VPEMKLPKVP (291 aa). Residues S838, S971, S1020, S1271, S1275, S1277, S1285, S1323, and S1329 each carry the phosphoserine modification. Residues 1251 to 1383 are disordered; sequence KVKSPKLRLP…RIEGTQAAAI (133 aa). The segment covering 1267–1277 has biased composition (low complexity); it reads SESASGEGSPS. Over residues 1346–1355 the composition is skewed to basic and acidic residues; the sequence is GSKDREEGGF. S1361 bears the Phosphoserine mark.

It belongs to the periaxin family. Homodimer (via PDZ domain). Interacts with SCN10A. Found in a complex with SCN10A. Interacts with DRP2. Identified in a dystroglycan complex that contains at least PRX, DRP2, UTRN, DMD and DAG1. Detected in a complex composed of at least EZR, AHNAK, PPL and PRX. Identified in a complex with EZR, AHNAK, BFSP1, BFSP2, ANK2, PLEC, VIM and spectrin. In terms of processing, the N-terminus is blocked. As to expression, detected in sciatic nerve and in trigeminal nerve Schwann cells. Detected in myelinating Schwann cells in sciatic nerve (at protein level).

Its subcellular location is the nucleus. The protein localises to the cytoplasm. It localises to the cell membrane. It is found in the cell junction. Scaffolding protein that functions as part of a dystroglycan complex in Schwann cells, and as part of EZR and AHNAK-containing complexes in eye lens fiber cells. Required for the maintenance of the peripheral myelin sheath that is essential for normal transmission of nerve impulses and normal perception of sensory stimuli. Required for normal transport of MBP mRNA from the perinuclear to the paranodal regions. Required for normal remyelination after nerve injury. Required for normal elongation of Schwann cells and normal length of the internodes between the nodes of Ranvier. The demyelinated nodes of Ranvier permit saltatory transmission of nerve impulses; shorter internodes cause slower transmission of nerve impulses. Required for the formation of appositions between the abaxonal surface of the myelin sheath and the Schwann cell plasma membrane; the Schwann cell cytoplasm is restricted to regions between these appositions. Required for the formation of Cajal bands and of Schmidt-Lanterman incisures that correspond to short, cytoplasm-filled regions on myelinated nerves. Recruits DRP2 to the Schwann cell plasma membrane. Required for normal protein composition of the eye lens fiber cell plasma membrane and normal eye lens fiber cell morphology. This is Periaxin (Prx) from Rattus norvegicus (Rat).